We begin with the raw amino-acid sequence, 236 residues long: 2-C-methyl-D-erythritol 4-phosphate cytidylyltransferase (236 aa).

The protein belongs to the IspD/TarI cytidylyltransferase family. IspD subfamily. In terms of assembly, homodimer.

It carries out the reaction 2-C-methyl-D-erythritol 4-phosphate + CTP + H(+) = 4-CDP-2-C-methyl-D-erythritol + diphosphate. The protein operates within isoprenoid biosynthesis; isopentenyl diphosphate biosynthesis via DXP pathway; isopentenyl diphosphate from 1-deoxy-D-xylulose 5-phosphate: step 2/6. In terms of biological role, catalyzes the formation of 4-diphosphocytidyl-2-C-methyl-D-erythritol from CTP and 2-C-methyl-D-erythritol 4-phosphate (MEP). The sequence is that of 2-C-methyl-D-erythritol 4-phosphate cytidylyltransferase from Escherichia fergusonii (strain ATCC 35469 / DSM 13698 / CCUG 18766 / IAM 14443 / JCM 21226 / LMG 7866 / NBRC 102419 / NCTC 12128 / CDC 0568-73).